Consider the following 277-residue polypeptide: Outer kinetochore KNL1 complex subunit ZWINT (277 aa).

Positions 80–155 (ASEDTSRQKA…MEKRRAVQNQ (76 aa)) are interaction with NDC80 and ZW10. Residues 104–217 (REHVEAIKIG…RYQTFLQLLY (114 aa)) adopt a coiled-coil conformation. The segment at 228–277 (AEAEAENLPDDKPQQPTRPQEQSTGDTMGRDPGVSFKAVGLQPAGDVNLP) is disordered. The span at 241 to 253 (QQPTRPQEQSTGD) shows a compositional bias: polar residues.

In terms of assembly, component of the KNL1 complex composed of KNL1 and ZWINT. Part of the ten-subunit outer kinetochore KMN network that includes the KNL1, MIS12 and NDC80 complexes; a bioriented kinetochore contains approximately 150 copies of the network. Interacts with the MIS12 complex subunits MIS12 DSN1, and PMF1. Interacts with the NDC80 complex subunit NDC80 during mitosis. Interacts with ZW10. Interacts with CETN3.

The protein resides in the nucleus. The protein localises to the chromosome. It is found in the centromere. Its subcellular location is the kinetochore. In terms of biological role, acts as a component of the outer kinetochore KNL1 complex that serves as a docking point for spindle assembly checkpoint components and mediates microtubule-kinetochore interactions. Kinetochores, consisting of a centromere-associated inner segment and a microtubule-contacting outer segment, play a crucial role in chromosome segregation by mediating the physical connection between centromeric DNA and spindle microtubules. The outer kinetochore is made up of the ten-subunit KMN network, comprising the MIS12, NDC80 and KNL1 complexes, and auxiliary microtubule-associated components; together they connect the outer kinetochore with the inner kinetochore, bind microtubules, and mediate interactions with mitotic checkpoint proteins that delay anaphase until chromosomes are bioriented on the spindle. Targets the RZZ complex to the kinetochore at prometaphase. Recruits MAD2L1 to the kinetochore, but is not required for BUB1B localization. In addition to orienting mitotic chromosomes, it is also essential for alignment of homologous chromosomes during meiotic metaphase I. In meiosis I, required to activate the spindle assembly checkpoint at unattached kinetochores to correct erroneous kinetochore-microtubule attachments. In Homo sapiens (Human), this protein is Outer kinetochore KNL1 complex subunit ZWINT (ZWINT).